We begin with the raw amino-acid sequence, 424 residues long: Probable threonylcarbamoyladenosine tRNA methylthiotransferase (424 aa).

One can recognise an MTTase N-terminal domain in the interval 4 to 115; that stretch reads IRVYIETFGC…APQAVRAASN (112 aa). Residues Cys13, Cys48, Cys79, Cys150, Cys154, and Cys157 each coordinate [4Fe-4S] cluster. Residues 136 to 365 form the Radical SAM core domain; the sequence is RSNPLIHIIP…EELKMRITEE (230 aa). The 57-residue stretch at 368-424 folds into the TRAM domain; sequence RRLVGSFQEILVVERGRKGGFIGRTGSYIPVVTETGEPGSFRRVRIRDATGTYLLAD.

Belongs to the methylthiotransferase family. CDKAL1 subfamily. [4Fe-4S] cluster is required as a cofactor.

It catalyses the reaction N(6)-L-threonylcarbamoyladenosine(37) in tRNA + (sulfur carrier)-SH + AH2 + 2 S-adenosyl-L-methionine = 2-methylsulfanyl-N(6)-L-threonylcarbamoyladenosine(37) in tRNA + (sulfur carrier)-H + 5'-deoxyadenosine + L-methionine + A + S-adenosyl-L-homocysteine + 2 H(+). Its function is as follows. Catalyzes the methylthiolation of N6-threonylcarbamoyladenosine (t(6)A), leading to the formation of 2-methylthio-N6-threonylcarbamoyladenosine (ms(2)t(6)A) at position 37 in tRNAs that read codons beginning with adenine. In Methanothermobacter thermautotrophicus (strain ATCC 29096 / DSM 1053 / JCM 10044 / NBRC 100330 / Delta H) (Methanobacterium thermoautotrophicum), this protein is Probable threonylcarbamoyladenosine tRNA methylthiotransferase.